Consider the following 168-residue polypeptide: MSRSRTNGNFIDKTFSIVANILLQIIPTTSGEKEAFTYYRDGMSAQSEGNYAEALQNYYEAMRLEMDPYDRSYILYNIGLIHTSNGEHTKALEYYFRALERNPFLPQAFNNMAVICHYRGEQAVREGDSEIAEAWFDQAAEYWKQAIALTPGNYIEAHNWLKITRRFE.

3 TPR repeats span residues A35–P68, S72–L105, and G120–N153.

The protein belongs to the Ycf3 family.

It is found in the plastid. It localises to the chloroplast thylakoid membrane. Essential for the assembly of the photosystem I (PSI) complex. May act as a chaperone-like factor to guide the assembly of the PSI subunits. The protein is Photosystem I assembly protein Ycf3 of Plantago lanceolata (English plantain).